The primary structure comprises 334 residues: Glycerol-1-phosphate dehydrogenase [NAD(P)+] (334 aa).

Residues 77–81 (GKPID) and 99–102 (TTAS) contribute to the NAD(+) site. Asp-104 contacts substrate. Ser-108 is an NAD(+) binding site. Asp-147 provides a ligand contact to substrate. Asp-147 and His-225 together coordinate Zn(2+). His-229 serves as a coordination point for substrate. His-246 is a Zn(2+) binding site.

The protein belongs to the glycerol-1-phosphate dehydrogenase family. It depends on Zn(2+) as a cofactor.

It is found in the cytoplasm. It catalyses the reaction sn-glycerol 1-phosphate + NAD(+) = dihydroxyacetone phosphate + NADH + H(+). It carries out the reaction sn-glycerol 1-phosphate + NADP(+) = dihydroxyacetone phosphate + NADPH + H(+). Its pathway is membrane lipid metabolism; glycerophospholipid metabolism. Catalyzes the NAD(P)H-dependent reduction of dihydroxyacetonephosphate (DHAP or glycerone phosphate) to glycerol 1-phosphate (G1P). The G1P thus generated is used as the glycerophosphate backbone of phospholipids in the cellular membranes of Archaea. The protein is Glycerol-1-phosphate dehydrogenase [NAD(P)+] of Methanococcus vannielii (strain ATCC 35089 / DSM 1224 / JCM 13029 / OCM 148 / SB).